A 213-amino-acid polypeptide reads, in one-letter code: Motile sperm domain-containing protein 1 (213 aa).

In terms of domain architecture, MSP spans 16–143; it reads PVFVFPTELI…KEHLTESVFF (128 aa). The next 2 membrane-spanning stretches (helical) occupy residues 159–179 and 191–211; these read SLLT…PTLG and LSVN…MAIL. Residues 205–208 carry the Nuclear export signal motif; that stretch reads LITM.

The protein resides in the endoplasmic reticulum membrane. The protein localises to the golgi apparatus membrane. Its function is as follows. Plays a role in differentiation and/or proliferation of mesenchymal stem cells. Proposed to be involved in epithelial-to-mesenchymal transition (EMT). However, another study suggests that it is not required for EMT or stem cell self-renewal and acts during later stages of differentiation. This chain is Motile sperm domain-containing protein 1 (Mospd1), found in Rattus norvegicus (Rat).